The chain runs to 415 residues: WD repeat and FYVE domain-containing protein 2 (415 aa).

WD repeat units follow at residues 71-103 (HHFM…YEFS), 119-148 (CHAG…IVWH), 202-232 (AHTN…IMWD), and 245-284 (GHNG…VETP). The segment at 286–357 (WKTSDCCQKC…ICNDCNARMK (72 aa)) adopts an FYVE-type zinc-finger fold. 8 residues coordinate Zn(2+): cysteine 292, cysteine 295, cysteine 319, cysteine 322, cysteine 327, cysteine 330, cysteine 349, and cysteine 352. Residues 373-403 (EIHTGITAMHLQETLGLLVTSGQNRVIMIWD) form a WD 5 repeat.

Its function is as follows. Plays a role in coelomocyte endocytosis. The protein is WD repeat and FYVE domain-containing protein 2 (wdfy-2) of Caenorhabditis elegans.